The chain runs to 271 residues: 2,3,4,5-tetrahydropyridine-2,6-dicarboxylate N-succinyltransferase (271 aa).

Residues arginine 102 and aspartate 139 each contribute to the substrate site.

This sequence belongs to the transferase hexapeptide repeat family. Homotrimer.

The protein resides in the cytoplasm. The enzyme catalyses (S)-2,3,4,5-tetrahydrodipicolinate + succinyl-CoA + H2O = (S)-2-succinylamino-6-oxoheptanedioate + CoA. Its pathway is amino-acid biosynthesis; L-lysine biosynthesis via DAP pathway; LL-2,6-diaminopimelate from (S)-tetrahydrodipicolinate (succinylase route): step 1/3. In Coxiella burnetii (strain RSA 331 / Henzerling II), this protein is 2,3,4,5-tetrahydropyridine-2,6-dicarboxylate N-succinyltransferase.